Here is a 470-residue protein sequence, read N- to C-terminus: D-serine/D-alanine/glycine transporter (470 aa).

The next 12 helical transmembrane spans lie at 30 to 50, 51 to 71, 102 to 122, 128 to 148, 162 to 182, 211 to 231, 256 to 276, 283 to 303, 350 to 370, 371 to 391, 413 to 433, and 441 to 461; these read LIAI…KTIS, LAGP…FFVM, FTGW…VVAI, FWFP…LLLV, FWFA…GLVM, LSGF…IELV, IIMF…WSSV, FVEL…NFVV, FSCI…SVIG, AFTM…TIIL, PLGK…LVLL, and QALL…LFIG.

This sequence belongs to the amino acid-polyamine-organocation (APC) superfamily. Amino acid transporter (AAT) (TC 2.A.3.1) family.

It localises to the cell inner membrane. The enzyme catalyses D-alanine(in) + H(+)(in) = D-alanine(out) + H(+)(out). It carries out the reaction D-serine(out) + H(+)(out) = D-serine(in) + H(+)(in). It catalyses the reaction glycine(in) + H(+)(in) = glycine(out) + H(+)(out). The catalysed reaction is D-cycloserine(in) + H(+)(in) = D-cycloserine(out) + H(+)(out). With respect to regulation, uptake of D-serine is inhibited by D-alanine, D-cycloserine, glycine and at high concentrations of D-threonine. Functionally, permease that is involved in the transport across the cytoplasmic membrane of D-alanine, D-serine and glycine. Is the only transporter of D-alanine. Transports D-serine less efficiently than DsdX. In addition, in minimal media, transports the broad spectrum antibiotic D-cycloserine into the cell. Transports D-cycloserine only in minimal media, and not in a complex medium, suggesting that CycA does not play a role in D-cycloserine transport when E.coli is grown in a complex or biologically relevant medium, probably due to competition from other CycA substrates present in the medium. In Escherichia coli O6:H1 (strain CFT073 / ATCC 700928 / UPEC), this protein is D-serine/D-alanine/glycine transporter (cycA).